A 424-amino-acid chain; its full sequence is Dihydroorotase-like protein (424 aa).

This sequence belongs to the metallo-dependent hydrolases superfamily. DHOase family. PyrC' subfamily. As to quaternary structure, heterododecamer of 6 active PyrB subunits and 6 non-catalytic PyrC' subunits.

In terms of biological role, non-functional DHOase. The sequence is that of Dihydroorotase-like protein from Pseudomonas putida (Arthrobacter siderocapsulatus).